The sequence spans 269 residues: MNFLGVINPVALQLGPFQIRWYGIIIASAVILAVYLSVLEGRKQNILDDDIYDLLLYSLPVAIICARIYYVVFEWSYYSHHLSETYRIWDGGIAIYGALIGAVIVILIFCRRRNIPTWTLLDVIAPTVILAQGIGRWGNFMNQEAHGVATTLGFLKSLHLPKFIINQMYIDGTYYQPTFLYESLWDISGFVVLIILRRQKKLLKSGEVVLSYIIWYSFGRFFIEGMRTDSLMLGSLRVSQWLSLILFISAIAAIFYRRYNDPLLKWYTE.

3 helical membrane-spanning segments follow: residues 21-41 (WYGI…VLEG), 54-74 (LLLY…VVFE), and 88-108 (IWDG…VILI). Arginine 136 provides a ligand contact to a 1,2-diacyl-sn-glycero-3-phospho-(1'-sn-glycerol). A run of 2 helical transmembrane segments spans residues 206 to 226 (GEVV…IEGM) and 236 to 256 (LRVS…AIFY).

It belongs to the Lgt family.

The protein resides in the cell membrane. It catalyses the reaction L-cysteinyl-[prolipoprotein] + a 1,2-diacyl-sn-glycero-3-phospho-(1'-sn-glycerol) = an S-1,2-diacyl-sn-glyceryl-L-cysteinyl-[prolipoprotein] + sn-glycerol 1-phosphate + H(+). Its pathway is protein modification; lipoprotein biosynthesis (diacylglyceryl transfer). Its function is as follows. Catalyzes the transfer of the diacylglyceryl group from phosphatidylglycerol to the sulfhydryl group of the N-terminal cysteine of a prolipoprotein, the first step in the formation of mature lipoproteins. The polypeptide is Phosphatidylglycerol--prolipoprotein diacylglyceryl transferase (Ligilactobacillus salivarius (strain UCC118) (Lactobacillus salivarius)).